We begin with the raw amino-acid sequence, 503 residues long: Xylan O-acetyltransferase 12 (503 aa).

Residues 1–54 (MWSALFSHLREVHKRSGVKEEKLIMKSPAAAGEAAGCHKPQATATNKMTVLQSP) are Cytoplasmic-facing. A helical; Signal-anchor for type II membrane protein membrane pass occupies residues 55 to 77 (LGLRTILTSLVAFFIVVSSVSLL). Topologically, residues 78–503 (FDRSQDAQAQ…EFLYAYLMHK (426 aa)) are lumenal. Cystine bridges form between cysteine 153-cysteine 204, cysteine 175-cysteine 240, cysteine 184-cysteine 484, and cysteine 400-cysteine 480. N-linked (GlcNAc...) asparagine glycans are attached at residues asparagine 154, asparagine 164, asparagine 190, and asparagine 210. The GDS motif signature appears at 227-229 (GDS). Serine 229 serves as the catalytic Nucleophile. 5 N-linked (GlcNAc...) asparagine glycosylation sites follow: asparagine 256, asparagine 268, asparagine 373, asparagine 402, and asparagine 443. Residue aspartate 479 is the Proton donor of the active site. The DXXH motif signature appears at 479–482 (DCTH). Histidine 482 serves as the catalytic Proton acceptor.

It belongs to the PC-esterase family. TBL subfamily.

The protein localises to the golgi apparatus membrane. Its function is as follows. Xylan acetyltransferase required for 2-O- and 3-O-monoacetylation of xylosyl residues in xylan. Catalyzes the 2-O-acetylation of xylan, followed by nonenzymatic acetyl migration to the O-3 position, resulting in products that are monoacetylated at both O-2 and O-3 positions. The chain is Xylan O-acetyltransferase 12 from Oryza sativa subsp. japonica (Rice).